The following is a 188-amino-acid chain: dCTP deaminase (188 aa).

DCTP contacts are provided by residues 111 to 116 (KSTYAR), 135 to 137 (TLE), Gln156, Tyr170, and Gln180. Glu137 functions as the Proton donor/acceptor in the catalytic mechanism.

Belongs to the dCTP deaminase family. Homotrimer.

It carries out the reaction dCTP + H2O + H(+) = dUTP + NH4(+). It functions in the pathway pyrimidine metabolism; dUMP biosynthesis; dUMP from dCTP (dUTP route): step 1/2. Its function is as follows. Catalyzes the deamination of dCTP to dUTP. In Thioalkalivibrio sulfidiphilus (strain HL-EbGR7), this protein is dCTP deaminase.